The primary structure comprises 7158 residues: Twitchin (7158 aa).

Ig-like domains lie at 5–97 (PRFT…INLN) and 111–204 (PSFV…LALN). Intrachain disulfides connect Cys-25/Cys-81 and Cys-132/Cys-188. Disordered regions lie at residues 204-381 (NFEE…PIVL), 473-639 (EEEL…TKLR), 658-732 (KKVK…DSMA), and 763-955 (EVKE…IDMR). Over residues 220-238 (TASPRPSSRGPGSRPSSPK) the composition is skewed to low complexity. Basic and acidic residues-rich tracts occupy residues 242–259 (KSREGTPKRTLKPREGSP) and 279–291 (ESRRSSRTDKMEV). Composition is skewed to low complexity over residues 319–340 (SPSTRKSPSRKSASPTPSRKGS) and 347–368 (SGTTGASASATSATSGGSASSD). The region spanning 377 to 466 (PPIVLEASRS…GEGQSSAMVK (90 aa)) is the Ig-like 3 domain. A compositionally biased stretch (basic residues) spans 504–513 (RVARRSKSKS). Low complexity predominate over residues 514-523 (KSPAPQAKKS). 2 stretches are compositionally biased toward basic and acidic residues: residues 529–540 (GRQEASEVEHKR) and 601–618 (KTDSPPKQDDMFSRDTLL). Positions 620–630 (KTTTSTKNESS) are enriched in low complexity. The stretch at 718 to 764 (VKSGAGGLEKSDSMASLKKLDLKKGKIDDNSDGAFKVQLKKVVKKEV) is one Kelch 1 repeat. Composition is skewed to basic and acidic residues over residues 763 to 813 (EVKE…DKPK), 837 to 850 (KEVEEKSTSEELKA), 885 to 897 (KAHDDTNELEGIK), and 917 to 955 (SESRRGSVFGELRRGSRAPRDSADNSRRDSIRRSSIDMR). An Ig-like 4 domain is found at 980–1072 (PKIVEVPENV…DSADVKLLVT (93 aa)). A disordered region spans residues 1088 to 1118 (SQAGFQKDGEGGGAGGGGGEKKPMTEAERRQ). The segment covering 1106-1118 (GEKKPMTEAERRQ) has biased composition (basic and acidic residues). Ig-like domains are found at residues 1122-1213 (PGKK…AQLT), 1217-1306 (PPMK…SKVQ), and 1312-1398 (PRHT…AQLI). A disulfide bond links Cys-1150 and Cys-1201. 8 consecutive Fibronectin type-III domains span residues 1598–1690 (PKGP…AKNP), 1696–1791 (KPKN…MKAK), 1891–1988 (PPKG…IKDP), 1994–2087 (KPGR…AKPK), 2189–2282 (PNGP…AKNP), 2288–2383 (KTGT…AKPR), 2483–2576 (PLGP…AKNP), and 2579–2675 (VPGK…AKPR). One copy of the Kelch 2 repeat lies at 2014 to 2058 (PPHKDGGAPIEEYIVEVRDPDTKEWKEVKRVPDTNASISGLKEGK). In terms of domain architecture, Ig-like 8 spans 2086-2181 (PKFIPAWLKH…GADEEKANLT (96 aa)). The stretch at 2207 to 2253 (WKPPDDDGGEPIEYYEVEKLDTATGRWVPCAKVKDTKAHIDGLKKGQ) is one Kelch 3 repeat. Positions 2266–2287 (GASDALSTDKDTKAKNPYDEPG) are enriched in basic and acidic residues. The disordered stretch occupies residues 2266 to 2295 (GASDALSTDKDTKAKNPYDEPGKTGTPDVV). A Kelch 4 repeat occupies 2502 to 2547 (KVPEDDGGAPIDHYEIEKMDLATGRWVPCGRSETTKTTVPNLQPGH). The Ig-like 9 domain maps to 2679-2763 (PRIHREDLSD…TNINGTDSVT (85 aa)). Fibronectin type-III domains are found at residues 2775-2868 (PKGP…AKNP) and 2874-2968 (RPGR…AKPR). The Kelch 5 repeat unit spans residues 2793–2839 (WKPPEDDGGEPIEFYEIEKMNTKDGIWVPCGRSGDTHFTVDSLNKGD). Positions 2849–2901 (NSEGPSDPLETETDILAKNPFDRPDRPGRPEPTDWDSDHVDLKWDPPLSDGGA) are disordered. Residues 2868 to 2892 (PFDRPDRPGRPEPTDWDSDHVDLKW) show a composition bias toward basic and acidic residues. One can recognise an Ig-like 10 domain in the interval 2972–3062 (PHIDRDALKN…GEDEATVKIN (91 aa)). 2 consecutive Fibronectin type-III domains span residues 3070 to 3165 (PNGP…AKDP) and 3171 to 3265 (KTNA…AKAR). A Kelch 6 repeat occupies 3089-3134 (RAPDDDGGIPIENYVIEKYDTASGRWVPAAKVAGDKTTAVVDGLIP). In terms of domain architecture, Ig-like 11 spans 3268-3358 (PPVIDRNSIQ…GTDTAEVKVT (91 aa)). Fibronectin type-III domains lie at 3365–3459 (SPRG…AKDP) and 3465–3559 (KPGT…AKPR). The Kelch 7 repeat unit spans residues 3384-3430 (WKEPEDDGGAEISHYVIEKQDAATGRWTACGESKDTNFHVDDLTQGH). The Ig-like 12 domain maps to 3563–3653 (PKINRDMFVA…GKDEHEVDVN (91 aa)). 6 consecutive Fibronectin type-III domains span residues 3661-3753 (PEGP…AKNP), 3759-3853 (APTD…AKPR), 3954-4047 (PEGP…AKNQ), 4053-4146 (PVDK…TKAR), 4246-4340 (PEGP…AKDP), and 4346-4440 (KPGR…TAKP). A Kelch 8 repeat occupies 3972 to 4018 (WKPPTDNGGTDVLHYIVEKMDTSRGTWQEVGTFPDCTAKVNKLVPGK). Kelch repeat units follow at residues 4265 to 4310 (KPPK…LTEG) and 4365 to 4410 (DPPR…RVQK). Residues 4445 to 4531 (PKFDLDLDGK…GEAEANIKIT (87 aa)) form the Ig-like 13 domain. 8 Fibronectin type-III domains span residues 4538-4631 (APEN…IKDP), 4637-4733 (APST…CRPY), 4739-4834 (APDA…IEEQ), 4936-5028 (PTGP…AKNP), 5034-5129 (APGQ…ADNA), 5231-5326 (SPQH…VAKY), 5333-5427 (QPEA…LKSR), and 5430-5528 (PPGP…IQES). The Kelch 11 repeat unit spans residues 4557–4602 (DAPKDDGGAEIAGYKIEYQEVGSQIWDKVPGLISGTAYTVRGLEHG). The Kelch 12 repeat unit spans residues 5287–5335 (LNYTVGGLIKDNRYRFRVRAETQYGVSEPCELADVVVAKYQFEVPNQPE). In terms of domain architecture, Ig-like 14 spans 5533 to 5621 (PQIVVKPEDT…GSDTATANLV (89 aa)). Fibronectin type-III domains follow at residues 5723 to 5817 (PQGP…ARLP) and 5823 to 5919 (SPLN…ASGS). The Kelch 13 repeat unit spans residues 5742–5787 (RPPVTDGGSKITSYVVEKRDLSKDEWVTVTSNVKDMNYIVTGLFEN). Ig-like domains follow at residues 5923–6011 (PKIV…ANLR) and 6016–6107 (PRVF…VNVT). A disulfide bridge links Cys-5944 with Cys-5995. Positions 6114-6207 (PPRFPIIENI…PTAPVLIPGD (94 aa)) constitute a Fibronectin type-III 31 domain. The Protein kinase domain occupies 6261 to 6516 (YDIHEELGTG…IHQALEHPWL (256 aa)). Residues 6267–6275 (LGTGAFGVV) and Lys-6290 each bind ATP. Residue Asp-6382 is the Proton acceptor of the active site. Positions 6517-6581 (TPGNAPGRDS…SIRDAFWDRS (65 aa)) are C-terminal regulatory domain (CDR). Ig-like domains are found at residues 6585 to 6673 (PRFI…VFLN), 6696 to 6795 (PRVE…CVLT), 6863 to 6952 (PSFT…ATLT), 6958 to 7059 (PLLN…ASLV), and 7067 to 7149 (PPVT…KAIA).

This sequence belongs to the protein kinase superfamily. CAMK Ser/Thr protein kinase family. May interact (via protein kinase and CRD domains) with mak-1 (via protein kinase domain). Mg(2+) serves as cofactor. Post-translationally, phosphorylated by mak-1 on the protein kinase domain and/or CDR domain in vitro. As to expression, expressed in body wall, anal, vulval, and pharyngeal muscles (at protein level).

The protein localises to the cytoplasm. The protein resides in the myofibril. It localises to the sarcomere. Its subcellular location is the a band. The enzyme catalyses L-seryl-[protein] + ATP = O-phospho-L-seryl-[protein] + ADP + H(+). The catalysed reaction is L-threonyl-[protein] + ATP = O-phospho-L-threonyl-[protein] + ADP + H(+). Its activity is regulated as follows. Forces generated by the contraction/relaxation cycles of muscle activity separate the regulatory domain from the catalytic core, activating the enzyme. At rest, the kinase domain is in a closed conformation. The active site is occupied by the autoinhibitory region (CDR), which makes extensive contact with the catalytic site, blocking substrate binding. At low forces the regulatory tail will unravel reversibly and expose the active site to its substrates, potentially stabilized by binding of Ca/CALM. At high forces the kinase begins to unfold and the integrity of the active site is disrupted. Regulator of muscle contraction and relaxation. Senses mechanical strain that occurs during muscle activity by unfolding in clearly resolvable steps at differing forces. Plays a role in the organization of sarcomeres in body wall muscles. The sequence is that of Twitchin from Caenorhabditis elegans.